Here is a 108-residue protein sequence, read N- to C-terminus: Inner membrane protein H108R (108 aa).

The helical transmembrane segment at 10–32 threads the bilayer; that stretch reads LIVIITILITTRELSTTMLIVSL. A compositionally biased stretch (polar residues) spans 49 to 64; sequence ENNTFSMPQKNSFSES. A disordered region spans residues 49–69; it reads ENNTFSMPQKNSFSESYNKDK. N50 carries an N-linked (GlcNAc...) asparagine; by host glycan.

The protein belongs to the asfivirus H108R family.

It localises to the virion membrane. This chain is Inner membrane protein H108R, found in Ornithodoros (relapsing fever ticks).